The chain runs to 1363 residues: Vascular endothelial growth factor receptor 3 (1363 aa).

The first 24 residues, 1–24, serve as a signal peptide directing secretion; sequence MQPGAALNLRLWLCLGLLQGLANG. Residues 25-775 lie on the Extracellular side of the membrane; that stretch reads YSMTPPTLNI…EGSEDKGSME (751 aa). N-linked (GlcNAc...) asparagine glycans are attached at residues N33, N104, N166, N251, N299, and N411. 7 consecutive Ig-like C2-type domains span residues 44 to 118, 151 to 213, 230 to 326, 331 to 415, 422 to 552, 555 to 671, and 678 to 764; these read GDSL…YIKA, KDSM…WGDQ, YDIQ…TEVI, PFIS…ISLE, PHIH…FYVT, PDGF…KYLS, and PRLT…ASVA. Disulfide bonds link C51–C111 and C158–C206. C252 and C310 are joined by a disulfide. Intrachain disulfides connect C445–C534, C466–C486, and C578–C653. Residues N515, N527, N582, N594, N683, and N690 are each glycosylated (N-linked (GlcNAc...) asparagine). C699 and C751 form a disulfide bridge. Residue N758 is glycosylated (N-linked (GlcNAc...) asparagine). The helical transmembrane segment at 776-796 threads the bilayer; it reads IVILIGTGVIAVFFWVLLLLI. Topologically, residues 797–1363 are cytoplasmic; sequence FCNMKRPAHA…GSTFFADSSY (567 aa). Phosphotyrosine; by SRC is present on residues Y830 and Y833. Residues 845-1173 form the Protein kinase domain; sequence LHLGRVLGHG…DLVEILGDLL (329 aa). Residues 851–859 and K879 each bind ATP; that span reads LGHGAFGKV. D1037 functions as the Proton acceptor in the catalytic mechanism. A Phosphotyrosine; by autocatalysis and SRC modification is found at Y1063. 4 positions are modified to phosphotyrosine; by autocatalysis: Y1068, Y1230, Y1231, and Y1265. The segment at 1288–1330 is disordered; sequence ESRHRPEGSFSCKGPGQHMDIPRGHPDPQGRRRRPTQGAQGGK. Positions 1307 to 1317 are enriched in basic and acidic residues; that stretch reads DIPRGHPDPQG. 2 positions are modified to phosphotyrosine; by autocatalysis and SRC: Y1333 and Y1337. Position 1363 is a phosphotyrosine; by autocatalysis (Y1363).

This sequence belongs to the protein kinase superfamily. Tyr protein kinase family. CSF-1/PDGF receptor subfamily. Interacts with VEGFC and VEGFD. Monomer in the absence of bound VEGFC or VEGFD. Homodimer in the presence of bound VEGFC or VEGFD. Can also form a heterodimer with KDR. Interacts with PTPN14; the interaction is enhanced by stimulation with VEGFC. Interacts with CRK, GRB2, PTK2/FAK1, SHC1, PIK3R1 and PTPN11/SHP-2. Identified in a complex with SRC and ITGB1. In terms of processing, autophosphorylated on tyrosine residues upon ligand binding. Autophosphorylation occurs in trans, i.e. one subunit of the dimeric receptor phosphorylates tyrosine residues on the other subunit. Phosphorylation in response to H(2)O(2) is mediated by a process that requires SRC and PRKCD activity. Phosphorylation at Tyr-1068 is required for autophosphorylation at additional tyrosine residues. Phosphorylation at Tyr-1063 and Tyr-1337 is important for interaction with CRK and subsequent activation of MAPK8. Phosphorylation at Tyr-1230, Tyr-1231 and Tyr-1337 is important for interaction with GRB2 and subsequent activation of the AKT1 and MAPK1/ERK2 and/or MAPK3/ERK1 signaling pathways. In response to endothelial cell adhesion onto collagen, can also be phosphorylated in the absence of FLT4 kinase activity by SRC. In terms of tissue distribution, expressed in adult lung and liver, and in fetal liver, brain, intestine and placenta.

Its subcellular location is the cell membrane. The protein resides in the cytoplasm. The protein localises to the nucleus. It carries out the reaction L-tyrosyl-[protein] + ATP = O-phospho-L-tyrosyl-[protein] + ADP + H(+). Present in an inactive conformation in the absence of bound ligand. Binding of VEGFC or VEGFD leads to dimerization and activation by autophosphorylation on tyrosine residues. In terms of biological role, tyrosine-protein kinase that acts as a cell-surface receptor for VEGFC and VEGFD, and plays an essential role in adult lymphangiogenesis and in the development of the vascular network and the cardiovascular system during embryonic development. Promotes proliferation, survival and migration of endothelial cells, and regulates angiogenic sprouting. Signaling by activated FLT4 leads to enhanced production of VEGFC, and to a lesser degree VEGFA, thereby creating a positive feedback loop that enhances FLT4 signaling. Modulates KDR signaling by forming heterodimers. Mediates activation of the MAPK1/ERK2, MAPK3/ERK1 signaling pathway, of MAPK8 and the JUN signaling pathway, and of the AKT1 signaling pathway. Phosphorylates SHC1. Mediates phosphorylation of PIK3R1, the regulatory subunit of phosphatidylinositol 3-kinase. Promotes phosphorylation of MAPK8 at 'Thr-183' and 'Tyr-185', and of AKT1 at 'Ser-473'. This chain is Vascular endothelial growth factor receptor 3 (Flt4), found in Mus musculus (Mouse).